A 489-amino-acid polypeptide reads, in one-letter code: Glutamyl-tRNA(Gln) amidotransferase subunit A (489 aa).

Catalysis depends on charge relay system residues lysine 80 and serine 160. Serine 184 (acyl-ester intermediate) is an active-site residue.

The protein belongs to the amidase family. GatA subfamily. In terms of assembly, heterotrimer of A, B and C subunits.

The catalysed reaction is L-glutamyl-tRNA(Gln) + L-glutamine + ATP + H2O = L-glutaminyl-tRNA(Gln) + L-glutamate + ADP + phosphate + H(+). Allows the formation of correctly charged Gln-tRNA(Gln) through the transamidation of misacylated Glu-tRNA(Gln) in organisms which lack glutaminyl-tRNA synthetase. The reaction takes place in the presence of glutamine and ATP through an activated gamma-phospho-Glu-tRNA(Gln). In Wolbachia pipientis wMel, this protein is Glutamyl-tRNA(Gln) amidotransferase subunit A.